The primary structure comprises 381 residues: Homoserine O-succinyltransferase (381 aa).

Residues 45–360 (NAVLVCHALN…PHGHDAFLLD (316 aa)) form the AB hydrolase-1 domain. Serine 151 serves as the catalytic Nucleophile. Arginine 221 contributes to the substrate binding site. Catalysis depends on residues aspartate 321 and histidine 354. Aspartate 355 contributes to the substrate binding site.

Belongs to the AB hydrolase superfamily. MetX family. In terms of assembly, homodimer.

The protein resides in the cytoplasm. The enzyme catalyses L-homoserine + succinyl-CoA = O-succinyl-L-homoserine + CoA. Its pathway is amino-acid biosynthesis; L-methionine biosynthesis via de novo pathway; O-succinyl-L-homoserine from L-homoserine: step 1/1. In terms of biological role, transfers a succinyl group from succinyl-CoA to L-homoserine, forming succinyl-L-homoserine. The sequence is that of Homoserine O-succinyltransferase from Burkholderia cenocepacia (strain HI2424).